Consider the following 256-residue polypeptide: 7-cyano-7-deazaguanine synthase (256 aa).

Residues 1–22 (MTDASADALTSPSNSGASQDTS) form a disordered region. A compositionally biased stretch (polar residues) spans 8-22 (ALTSPSNSGASQDTS). 30–40 (LSGGLDSVTCL) provides a ligand contact to ATP. Zn(2+) contacts are provided by Cys-220, Cys-230, Cys-233, and Cys-236.

It belongs to the QueC family. Zn(2+) serves as cofactor.

It catalyses the reaction 7-carboxy-7-deazaguanine + NH4(+) + ATP = 7-cyano-7-deazaguanine + ADP + phosphate + H2O + H(+). It participates in purine metabolism; 7-cyano-7-deazaguanine biosynthesis. In terms of biological role, catalyzes the ATP-dependent conversion of 7-carboxy-7-deazaguanine (CDG) to 7-cyano-7-deazaguanine (preQ(0)). The protein is 7-cyano-7-deazaguanine synthase of Psychrobacter sp. (strain PRwf-1).